We begin with the raw amino-acid sequence, 67 residues long: ATP synthase F(0) complex subunit 8 (67 aa).

The helical transmembrane segment at 8–24 threads the bilayer; that stretch reads TWFINIVSMILTLFIVF. Lys54 carries the post-translational modification N6-acetyllysine; alternate. Lys54 is subject to N6-succinyllysine; alternate. At Lys57 the chain carries N6-acetyllysine.

This sequence belongs to the ATPase protein 8 family. Component of the ATP synthase complex composed at least of ATP5F1A/subunit alpha, ATP5F1B/subunit beta, ATP5MC1/subunit c (homooctomer), MT-ATP6/subunit a, MT-ATP8/subunit 8, ATP5ME/subunit e, ATP5MF/subunit f, ATP5MG/subunit g, ATP5MK/subunit k, ATP5MJ/subunit j, ATP5F1C/subunit gamma, ATP5F1D/subunit delta, ATP5F1E/subunit epsilon, ATP5PF/subunit F6, ATP5PB/subunit b, ATP5PD/subunit d, ATP5PO/subunit OSCP. ATP synthase complex consists of a soluble F(1) head domain (subunits alpha(3) and beta(3)) - the catalytic core - and a membrane F(0) domain - the membrane proton channel (subunits c, a, 8, e, f, g, k and j). These two domains are linked by a central stalk (subunits gamma, delta, and epsilon) rotating inside the F1 region and a stationary peripheral stalk (subunits F6, b, d, and OSCP). Interacts with PRICKLE3.

The protein resides in the mitochondrion membrane. Subunit 8, of the mitochondrial membrane ATP synthase complex (F(1)F(0) ATP synthase or Complex V) that produces ATP from ADP in the presence of a proton gradient across the membrane which is generated by electron transport complexes of the respiratory chain. ATP synthase complex consist of a soluble F(1) head domain - the catalytic core - and a membrane F(1) domain - the membrane proton channel. These two domains are linked by a central stalk rotating inside the F(1) region and a stationary peripheral stalk. During catalysis, ATP synthesis in the catalytic domain of F(1) is coupled via a rotary mechanism of the central stalk subunits to proton translocation. In vivo, can only synthesize ATP although its ATP hydrolase activity can be activated artificially in vitro. Part of the complex F(0) domain. The sequence is that of ATP synthase F(0) complex subunit 8 from Equus caballus (Horse).